Consider the following 166-residue polypeptide: Short form salivary protein D7R1 (166 aa).

Positions 1–21 (MFRKVFSVALVTCGLLVIVQA) are cleaved as a signal peptide.

The protein belongs to the PBP/GOBP family. In terms of assembly, interacts with host coagulation factor XII (F12) (inactive and activated) (via amino acids 1-77). Interacts with host high molecular weight kininogen (KNG1) (via amino acids 402-532). As to expression, female salivary gland (at protein level).

The protein resides in the secreted. Zn(2+) modulates binding to host coagulation factor XII (F12) and high molecular weight kininogen (KNG1). Functionally, salivary protein with anticoagulant activity that targets the intrinsic blood coagulation pathway in the host. Inhibits activation of the host plasma contact system by preventing the reciprocal activation of host coagulation factor XII (F12) and prekallikrein (KLKB1). Attenuates generation of bradykinin in host plasma. May bind and sequester different mediators involved in the host response, such as serotonin and histamine. This chain is Short form salivary protein D7R1, found in Anopheles stephensi (Indo-Pakistan malaria mosquito).